Here is a 174-residue protein sequence, read N- to C-terminus: Transcription factor bHLH168 (174 aa).

The bHLH domain occupies 14–63; sequence SLREQRNLREKERRMRMKHLFSILSSHVSPTRRLPVPQLIDQAVSYMIQL.

This sequence belongs to the bHLH protein family.

Its subcellular location is the nucleus. In Arabidopsis thaliana (Mouse-ear cress), this protein is Transcription factor bHLH168.